The primary structure comprises 1040 residues: Multidrug resistance protein MdtB (1040 aa).

12 consecutive transmembrane segments (helical) span residues 25 to 45 (LLMA…PVAA), 347 to 367 (LMLA…NIPA), 369 to 389 (IIPG…MVFL), 396 to 416 (LTLM…IVVI), 440 to 460 (IGFT…PLLF), 472 to 492 (FAVT…TLTP), 537 to 557 (WLTL…WIVI), 863 to 883 (LGST…VLGV), 888 to 908 (FIHP…ALLA), 910 to 930 (IIAG…LIGI), 968 to 988 (ILMT…STGV), and 998 to 1018 (IAMV…TPVI).

Belongs to the resistance-nodulation-cell division (RND) (TC 2.A.6) family. MdtB subfamily. Part of a tripartite efflux system composed of MdtA, MdtB and MdtC. MdtB forms a heteromultimer with MdtC.

Its subcellular location is the cell inner membrane. This Salmonella agona (strain SL483) protein is Multidrug resistance protein MdtB.